The following is a 335-amino-acid chain: Acetyl-coenzyme A carboxylase carboxyl transferase subunit alpha (335 aa).

One can recognise a CoA carboxyltransferase C-terminal domain in the interval 48 to 308; that stretch reads VLESKVDALR…KSLLVEELRM (261 aa).

The protein belongs to the AccA family. Acetyl-CoA carboxylase is a heterohexamer composed of biotin carboxyl carrier protein (AccB), biotin carboxylase (AccC) and two subunits each of ACCase subunit alpha (AccA) and ACCase subunit beta (AccD).

It is found in the cytoplasm. The catalysed reaction is N(6)-carboxybiotinyl-L-lysyl-[protein] + acetyl-CoA = N(6)-biotinyl-L-lysyl-[protein] + malonyl-CoA. The protein operates within lipid metabolism; malonyl-CoA biosynthesis; malonyl-CoA from acetyl-CoA: step 1/1. Its function is as follows. Component of the acetyl coenzyme A carboxylase (ACC) complex. First, biotin carboxylase catalyzes the carboxylation of biotin on its carrier protein (BCCP) and then the CO(2) group is transferred by the carboxyltransferase to acetyl-CoA to form malonyl-CoA. This chain is Acetyl-coenzyme A carboxylase carboxyl transferase subunit alpha, found in Chlorobium phaeobacteroides (strain BS1).